Consider the following 479-residue polypeptide: F-box protein At5g51380 (479 aa).

A disordered region spans residues 1 to 20; sequence MTFREKMPTSPKSPLRRRRS. The F-box domain maps to 62–108; sequence DRTLSLSDSLLLKILEKLPESQNEDVSLVCKRWLSVQGRRLRSMKVF.

The polypeptide is F-box protein At5g51380 (Arabidopsis thaliana (Mouse-ear cress)).